The following is a 105-amino-acid chain: Met repressor (105 aa).

Belongs to the MetJ family. In terms of assembly, homodimer.

The protein resides in the cytoplasm. This regulatory protein, when combined with SAM (S-adenosylmethionine) represses the expression of the methionine regulon and of enzymes involved in SAM synthesis. The sequence is that of Met repressor from Sodalis glossinidius (strain morsitans).